We begin with the raw amino-acid sequence, 90 residues long: Small ribosomal subunit protein bS20 (90 aa).

The protein belongs to the bacterial ribosomal protein bS20 family.

Functionally, binds directly to 16S ribosomal RNA. This is Small ribosomal subunit protein bS20 from Nautilia profundicola (strain ATCC BAA-1463 / DSM 18972 / AmH).